The chain runs to 264 residues: MLLTIDVRNTSIELGLFAGSGTHARLERHWRIHTNPLLTADELAMQLRGLIGGPLEQVIGVAALSTVPPVLRELRTMLARYWSHVPHVVVEPGVRTGIPLLVDNPKEIGADRIVNALAAHQRFGGPAIVVDFGTATTVDLVSAKGEFLGGVIAPGVAISGEALIEKAGLRRVELARPRSVVGKNTVEAIQSGAVFGFAGLVDGLIDRIRDEFDAFAGDDVTVVATGISAPLIVPESETIDQHEPHLTLTGLLRVYERNQQRRRT.

6-13 is a binding site for ATP; sequence DVRNTSIE. Residue 109–112 participates in substrate binding; the sequence is GADR. The active-site Proton acceptor is the D111. Residue D131 participates in K(+) binding. T134 provides a ligand contact to ATP. T185 is a substrate binding site.

Belongs to the type III pantothenate kinase family. As to quaternary structure, homodimer. NH4(+) serves as cofactor. It depends on K(+) as a cofactor.

It is found in the cytoplasm. The catalysed reaction is (R)-pantothenate + ATP = (R)-4'-phosphopantothenate + ADP + H(+). Its pathway is cofactor biosynthesis; coenzyme A biosynthesis; CoA from (R)-pantothenate: step 1/5. Catalyzes the phosphorylation of pantothenate (Pan), the first step in CoA biosynthesis. This is Type III pantothenate kinase from Nocardia farcinica (strain IFM 10152).